Here is a 172-residue protein sequence, read N- to C-terminus: Protein-export protein SecB (172 aa).

This sequence belongs to the SecB family. As to quaternary structure, homotetramer, a dimer of dimers. One homotetramer interacts with 1 SecA dimer.

The protein localises to the cytoplasm. One of the proteins required for the normal export of preproteins out of the cell cytoplasm. It is a molecular chaperone that binds to a subset of precursor proteins, maintaining them in a translocation-competent state. It also specifically binds to its receptor SecA. The protein is Protein-export protein SecB of Cupriavidus pinatubonensis (strain JMP 134 / LMG 1197) (Cupriavidus necator (strain JMP 134)).